A 650-amino-acid polypeptide reads, in one-letter code: XK-related protein 4 (650 aa).

Residues 1-15 (MAAKSDGRLKMKKSS) show a composition bias toward basic and acidic residues. The interval 1–44 (MAAKSDGRLKMKKSSDVAFTPLQNSDHSGSVQGLAPGLPSGSGA) is disordered. Polar residues predominate over residues 21–31 (PLQNSDHSGSV). Transmembrane regions (helical) follow at residues 114 to 134 (WILA…WLAV) and 144 to 164 (WFGL…VFSF). A Phosphoserine modification is found at Ser200. The interval 200 to 238 (SAAGEGEARPSTPQRQASNASKSNIAAANSGSNSSGATR) is disordered. A compositionally biased stretch (low complexity) spans 216-238 (ASNASKSNIAAANSGSNSSGATR). 8 consecutive transmembrane segments (helical) span residues 248-268 (CSFC…GQIW), 306-326 (HLLA…CIIV), 331-351 (LQAL…WALA), 365-385 (KPIS…TIAA), 396-418 (VFQL…WIVH), 428-448 (WEEI…WFNV), 457-477 (LFIY…LWYL), and 487-507 (FAIP…VFML).

It belongs to the XK family. Homodimer; homodimerization takes place upon caspase cleavage. Interacts with the processed C-terminus of XRCC4 (protein XRCC4, C-terminus); interaction promotes the phospholipid scramblase activity. Undergoes proteolytic processing by caspase-3 (CASP3), caspase-6 (CASP6) and caspase-7 (CASP7) to generate the XK-related protein 4, processed form, leading to its activation.

It is found in the cell membrane. It carries out the reaction a 1,2-diacyl-sn-glycero-3-phospho-L-serine(in) = a 1,2-diacyl-sn-glycero-3-phospho-L-serine(out). With respect to regulation, phospholipid scramblase activity is activated upon caspase cleavage to generate the XK-related protein 4, processed form. Does not act prior the onset of apoptosis. Homodimerizes upon caspase cleavage. Phospholipid scramblase activity is activated following interaction with the processed C-terminus of XRCC4 (protein XRCC4, C-terminus). In terms of biological role, phospholipid scramblase that promotes phosphatidylserine exposure on apoptotic cell surface. Phosphatidylserine is a specific marker only present at the surface of apoptotic cells and acts as a specific signal for engulfment. The polypeptide is XK-related protein 4 (Homo sapiens (Human)).